Consider the following 435-residue polypeptide: MDTIFAVSSGLLPSGVAVIRLSGSHVVHVVTTLCGCLPKARFMHYGNLTARDGSFLDSALTVFFPAPHSFTGEDCAEFHLHGGKAVVNRFLDELSTFKGCRIAEPGEFSRRAFMEGKLDLVQAEGLADLIEAETESQRRLAVMGTSGRLTTLYRDWRHKLMKIRAFIEAELDFSDEADIPNTVSDKVWKDVENLCISLREHIAEGERASILRDGFKIVIVGAPNSGKSSIMNRLAGKPVAIVTEEAGTTRDALEVRLVLGGLPVFLIDTAGFRETDNKIEQLGIEVAKQHVRDADLVILVYDMQNPKEVYLPETSAEIWRVGNKFDLYEENKEPWLIQFSALTGLNFDHFMKELESFCLRRVSEIGNLFPARKRQLQLLKEAVKEIENSVNYDSLDLSLRAEHLRRASDFLGKITGDIDVEDLLDIIFSEFCIGK.

Residues Arg20, Glu77, and Lys117 each coordinate (6S)-5-formyl-5,6,7,8-tetrahydrofolate. The TrmE-type G domain occupies 214-359 (GFKIVIVGAP…FMKELESFCL (146 aa)). GTP-binding positions include 224 to 229 (NSGKSS), 243 to 249 (TEEAGTT), and 268 to 271 (DTAG). Mg(2+) contacts are provided by Ser228 and Thr249. Lys435 contributes to the (6S)-5-formyl-5,6,7,8-tetrahydrofolate binding site.

Belongs to the TRAFAC class TrmE-Era-EngA-EngB-Septin-like GTPase superfamily. TrmE GTPase family. Homodimer. Heterotetramer of two MnmE and two MnmG subunits. The cofactor is K(+).

The protein localises to the cytoplasm. Its function is as follows. Exhibits a very high intrinsic GTPase hydrolysis rate. Involved in the addition of a carboxymethylaminomethyl (cmnm) group at the wobble position (U34) of certain tRNAs, forming tRNA-cmnm(5)s(2)U34. This Bartonella henselae (strain ATCC 49882 / DSM 28221 / CCUG 30454 / Houston 1) (Rochalimaea henselae) protein is tRNA modification GTPase MnmE.